The primary structure comprises 408 residues: uncharacterized protein (408 aa).

Disordered stretches follow at residues 184–206 (DENNNNSNNNNNNNSNNNSSILF) and 254–317 (NNKT…SSDS). Residues 187–206 (NNNSNNNNNNNSNNNSSILF) show a composition bias toward low complexity.

This is an uncharacterized protein from Dictyostelium discoideum (Social amoeba).